A 382-amino-acid polypeptide reads, in one-letter code: Secreted triacylglycerol lipase LIP5 (382 aa).

Residues C40 and C211 are joined by a disulfide bond. N-linked (GlcNAc...) asparagine glycosylation occurs at N115. Catalysis depends on S124, which acts as the Nucleophile. N-linked (GlcNAc...) asparagine glycans are attached at residues N157 and N232. Residues D271 and H305 contribute to the active site. The N-linked (GlcNAc...) asparagine glycan is linked to N346.

Belongs to the AB hydrolase superfamily. Lipase family. Class Lip subfamily.

The protein resides in the secreted. The catalysed reaction is a triacylglycerol + H2O = a diacylglycerol + a fatty acid + H(+). It catalyses the reaction a monoacylglycerol + H2O = glycerol + a fatty acid + H(+). It carries out the reaction a diacylglycerol + H2O = a monoacylglycerol + a fatty acid + H(+). Functionally, secreted lipase that hydrolyzes acylglycerol lipids such as triacylglycerols and consequently releases free fatty acid. Can hydrolyze 4-nitrophenyl palmitate to release 4-nitrophenol and palmitoic acid. Due to an absence of fatty acid synthase genes in Malassezia species, secretory lipases are essential for the yeast to generate free fatty acids from degradation of sebum and assimilate them as lipid sources for growth. Plays important roles not only in lipid metabolism but also in the immune response of host cells and pathogenesis. This is Secreted triacylglycerol lipase LIP5 from Malassezia furfur (Pityriasis versicolor infection agent).